Reading from the N-terminus, the 239-residue chain is Large ribosomal subunit protein uL30 (239 aa).

The disordered stretch occupies residues 1–37 (MSKFVPENVQKKLARDEKLRKAKAEQRKASSAQMKQR). Residues 9 to 28 (VQKKLARDEKLRKAKAEQRK) show a composition bias toward basic and acidic residues.

Belongs to the universal ribosomal protein uL30 family.

In Tetrahymena thermophila, this protein is Large ribosomal subunit protein uL30 (RPL7).